Here is a 148-residue protein sequence, read N- to C-terminus: SsrA-binding protein (148 aa).

A disordered region spans residues 123–148 (KLHDKRETEKKRDWEREKARIMRSAT). The span at 126–142 (DKRETEKKRDWEREKAR) shows a compositional bias: basic and acidic residues.

Belongs to the SmpB family.

Its subcellular location is the cytoplasm. In terms of biological role, required for rescue of stalled ribosomes mediated by trans-translation. Binds to transfer-messenger RNA (tmRNA), required for stable association of tmRNA with ribosomes. tmRNA and SmpB together mimic tRNA shape, replacing the anticodon stem-loop with SmpB. tmRNA is encoded by the ssrA gene; the 2 termini fold to resemble tRNA(Ala) and it encodes a 'tag peptide', a short internal open reading frame. During trans-translation Ala-aminoacylated tmRNA acts like a tRNA, entering the A-site of stalled ribosomes, displacing the stalled mRNA. The ribosome then switches to translate the ORF on the tmRNA; the nascent peptide is terminated with the 'tag peptide' encoded by the tmRNA and targeted for degradation. The ribosome is freed to recommence translation, which seems to be the essential function of trans-translation. This chain is SsrA-binding protein, found in Burkholderia thailandensis (strain ATCC 700388 / DSM 13276 / CCUG 48851 / CIP 106301 / E264).